A 689-amino-acid chain; its full sequence is Small ribosomal subunit protein mS39 (689 aa).

The N-terminal 37 residues, 1-37 (MAGVSAVRWLGLRSRLGQPLTGRRAGLCKQARSCRFY), are a transit peptide targeting the mitochondrion. Lys-126 carries the N6-acetyllysine modification. PPR repeat units follow at residues 149–183 (IKDI…GTTV), 184–219 (SLET…EALE), 255–289 (NAHS…RLHA), 290–330 (DVYT…KVKP), 331–367 (NLQT…GIEP), 368–404 (SLAT…MGKR), 412–446 (DDKF…DNWK), 454–488 (RNFY…VYFP), 489–523 (HSQT…GHTF), and 572–606 (PATS…NKIP). A disordered region spans residues 665 to 689 (NLTALTSDSDTDSSSDSDSDTSEGK). Positions 673-689 (SDTDSSSDSDSDTSEGK) are enriched in acidic residues.

This sequence belongs to the mitochondrion-specific ribosomal protein mS39 family. Component of the mitochondrial ribosome small subunit (28S) which comprises a 12S rRNA and about 30 distinct proteins. Associated with the 12S mitochondrial rRNA (12S mt-rRNA).

Its subcellular location is the mitochondrion. Its function is as follows. Mitochondrial RNA-binding protein that has a role in mitochondrial translation. This chain is Small ribosomal subunit protein mS39 (PTCD3), found in Pongo abelii (Sumatran orangutan).